The following is a 190-amino-acid chain: dCTP deaminase (190 aa).

113-118 (KSTYAR) contributes to the dCTP binding site. The Proton donor/acceptor role is filled by E139. Q158, Y172, K181, and Q182 together coordinate dCTP.

Belongs to the dCTP deaminase family. In terms of assembly, homotrimer.

The enzyme catalyses dCTP + H2O + H(+) = dUTP + NH4(+). It functions in the pathway pyrimidine metabolism; dUMP biosynthesis; dUMP from dCTP (dUTP route): step 1/2. Functionally, catalyzes the deamination of dCTP to dUTP. The chain is dCTP deaminase from Chlamydia trachomatis serovar A (strain ATCC VR-571B / DSM 19440 / HAR-13).